The following is a 519-amino-acid chain: Membrane-bound glycerophospholipid O-acyltransferase 2 (519 aa).

6 consecutive transmembrane segments (helical) span residues 22-42 (PIDQVNFVVCQLFALLAAVWF), 61-81 (TLLGLYLAFFCFGWYALHFLV), 88-108 (CIMIIAGVESMQQCCFVFALG), 184-204 (FMGILAGPLCSYKDYIAFIEG), 236-256 (LLVCGLSLLFHLTISNMLPVE), and 263-283 (FQATASWPTKATYLYVSLLAA). Catalysis depends on residues N341 and H372. A run of 3 helical transmembrane segments spans residues 365–385 (FFLSAIWHGVYPGYYLTFLTG), 415–435 (LITWVATQITISYTVVPFVLL), and 443–463 (FYSSWYYCLHVCSILVLLLLP). Positions 497–519 (FSTMNNVCNQNRDTGSRHSSLTQ) are disordered.

This sequence belongs to the membrane-bound acyltransferase family. As to expression, highly expressed in epididymis, brain, testis, and ovary.

The protein localises to the endoplasmic reticulum membrane. The catalysed reaction is a 1-acyl-sn-glycero-3-phosphocholine + an acyl-CoA = a 1,2-diacyl-sn-glycero-3-phosphocholine + CoA. It catalyses the reaction a 1-acyl-sn-glycero-3-phosphoethanolamine + an acyl-CoA = a 1,2-diacyl-sn-glycero-3-phosphoethanolamine + CoA. It carries out the reaction a 1-O-(1Z-alkenyl)-sn-glycero-3-phosphocholine + (9Z)-octadecenoyl-CoA = 1-O-(1Z)-alkenyl-2-(9Z)-octadecenoyl-sn-glycero-3-phosphocholine + CoA. The enzyme catalyses a 1-O-(1Z-alkenyl)-sn-glycero-3-phosphoethanolamine + (9Z)-octadecenoyl-CoA = 1-O-(1Z)-alkenyl-2-(9Z)-octadecenoyl-sn-glycero-3-phosphoethanolamine + CoA. The catalysed reaction is 1-octadecanoyl-sn-glycero-3-phosphoethanolamine + (9Z)-octadecenoyl-CoA = 1-octadecanoyl-2-(9Z-octadecenoyl)-sn-glycero-3-phosphoethanolamine + CoA. It catalyses the reaction 1-octadecanoyl-sn-glycero-3-phosphocholine + (9Z)-octadecenoyl-CoA = 1-octadecanoyl-2-(9Z-octadecenoyl)-sn-glycero-3-phosphocholine + CoA. It carries out the reaction 1-(9Z-octadecenoyl)-sn-glycero-3-phosphoethanolamine + (9Z)-octadecenoyl-CoA = 1,2-di-(9Z-octadecenoyl)-sn-glycero-3-phosphoethanolamine + CoA. The enzyme catalyses 1-hexadecanoyl-sn-glycero-3-phosphoethanolamine + (9Z)-octadecenoyl-CoA = 1-hexadecanoyl-2-(9Z-octadecenoyl)-sn-glycero-3-phosphoethanolamine + CoA. The catalysed reaction is 1-hexadecanoyl-sn-glycero-3-phosphocholine + (9Z)-octadecenoyl-CoA = 1-hexadecanoyl-2-(9Z-octadecenoyl)-sn-glycero-3-phosphocholine + CoA. It catalyses the reaction (9Z)-hexadecenoyl-CoA + 1-hexadecanoyl-sn-glycero-3-phosphocholine = 1-hexadecanoyl-2-(9Z-hexadecenoyl)-sn-glycero-3-phosphocholine + CoA. It carries out the reaction 1-hexadecanoyl-sn-glycero-3-phosphoethanolamine + (9Z)-hexadecenoyl-CoA = 1-hexadecanoyl-2-(9Z)-hexadecenoyl-sn-glycero-3-phosphoethanolamine + CoA. The enzyme catalyses (9Z,12Z)-octadecadienoyl-CoA + 1-hexadecanoyl-sn-glycero-3-phosphocholine = 1-hexadecanoyl-2-(9Z,12Z-octadecadienoyl)-sn-glycero-3-phosphocholine + CoA. It functions in the pathway lipid metabolism; phospholipid metabolism. With respect to regulation, partially inhibited by thimerosal. Functionally, acyltransferase which catalyzes the transfer of an acyl group from an acyl-CoA to a lysophospholipid leading to the production of a phospholipid and participates in the reacylation step of the phospholipid remodeling pathway also known as the Lands cycle. Catalyzes the acylation of lysophosphatidylcholine (1-acyl-sn-glycero-3-phosphocholine or LPC) and to a lesser extend lysophosphatidylethanolamine (1-acyl-sn-glycero-3-phosphoethanolamine or LPE). Does not acylates lysophosphatidic acid (LPA) and lysophosphatidylserine. Prefers oleoyl-CoA as the acyl donor. May be involved in chondrocyte differentiation. The protein is Membrane-bound glycerophospholipid O-acyltransferase 2 of Mus musculus (Mouse).